We begin with the raw amino-acid sequence, 278 residues long: Nucleotide-binding protein LHK_02029 (278 aa).

8 to 15 (GLAGSGKS) lines the ATP pocket. 57-60 (DTRD) contacts GTP.

Belongs to the RapZ-like family.

Its function is as follows. Displays ATPase and GTPase activities. This chain is Nucleotide-binding protein LHK_02029, found in Laribacter hongkongensis (strain HLHK9).